Consider the following 178-residue polypeptide: ATP synthase subunit b, chloroplastic (178 aa).

The chain crosses the membrane as a helical span at residues 26–46 (TNLINIIILLIILFYFLKGLL).

The protein belongs to the ATPase B chain family. In terms of assembly, F-type ATPases have 2 components, F(1) - the catalytic core - and F(0) - the membrane proton channel. F(1) has five subunits: alpha(3), beta(3), gamma(1), delta(1), epsilon(1). F(0) has four main subunits: a(1), b(1), b'(1) and c(10-14). The alpha and beta chains form an alternating ring which encloses part of the gamma chain. F(1) is attached to F(0) by a central stalk formed by the gamma and epsilon chains, while a peripheral stalk is formed by the delta, b and b' chains.

Its subcellular location is the plastid. The protein resides in the chloroplast thylakoid membrane. Functionally, f(1)F(0) ATP synthase produces ATP from ADP in the presence of a proton or sodium gradient. F-type ATPases consist of two structural domains, F(1) containing the extramembraneous catalytic core and F(0) containing the membrane proton channel, linked together by a central stalk and a peripheral stalk. During catalysis, ATP synthesis in the catalytic domain of F(1) is coupled via a rotary mechanism of the central stalk subunits to proton translocation. Component of the F(0) channel, it forms part of the peripheral stalk, linking F(1) to F(0). The protein is ATP synthase subunit b, chloroplastic of Vaucheria litorea (Yellow-green alga).